The primary structure comprises 181 residues: Isopentenyl-diphosphate Delta-isomerase (181 aa).

The Mn(2+) site is built by His-25 and His-32. The Nudix hydrolase domain occupies 30-164 (LLHLAFSCWL…PWAFSPWMVL (135 aa)). Cys-67 is a catalytic residue. A Mn(2+)-binding site is contributed by His-69. Glu-87 lines the Mg(2+) pocket. Glu-114 and Glu-116 together coordinate Mn(2+). Glu-116 is an active-site residue.

The protein belongs to the IPP isomerase type 1 family. Homodimer. Mg(2+) serves as cofactor. The cofactor is Mn(2+).

It localises to the cytoplasm. The catalysed reaction is isopentenyl diphosphate = dimethylallyl diphosphate. The protein operates within isoprenoid biosynthesis; dimethylallyl diphosphate biosynthesis; dimethylallyl diphosphate from isopentenyl diphosphate: step 1/1. Functionally, catalyzes the 1,3-allylic rearrangement of the homoallylic substrate isopentenyl (IPP) to its highly electrophilic allylic isomer, dimethylallyl diphosphate (DMAPP). The chain is Isopentenyl-diphosphate Delta-isomerase from Citrobacter koseri (strain ATCC BAA-895 / CDC 4225-83 / SGSC4696).